The sequence spans 612 residues: Membrane protein insertase YidC (612 aa).

7 consecutive transmembrane segments (helical) span residues 4–24 (NTIIGFILIFWVLFGFAYLNH), 329–349 (LVPLGWSLFRAINKCLIIPIF), 358–378 (VNLGLAILILTLIIKIALFPL), 434–454 (ILLQMPFLIALFMFFPSAIGL), 484–504 (FLGNHISLFCLLMSLATILNT), 524–544 (LTMYFMPVVMFFFLNSYPAGL), and 546–566 (YYYLISTLITIMQTIIFRGLV).

It belongs to the OXA1/ALB3/YidC family. Type 1 subfamily. As to quaternary structure, interacts with the Sec translocase complex via SecD. Specifically interacts with transmembrane segments of nascent integral membrane proteins during membrane integration.

It localises to the cell inner membrane. Its function is as follows. Required for the insertion and/or proper folding and/or complex formation of integral membrane proteins into the membrane. Involved in integration of membrane proteins that insert both dependently and independently of the Sec translocase complex, as well as at least some lipoproteins. Aids folding of multispanning membrane proteins. The protein is Membrane protein insertase YidC of Azobacteroides pseudotrichonymphae genomovar. CFP2.